We begin with the raw amino-acid sequence, 272 residues long: Formamidopyrimidine-DNA glycosylase (272 aa).

Pro-2 acts as the Schiff-base intermediate with DNA in catalysis. Glu-3 functions as the Proton donor in the catalytic mechanism. The active-site Proton donor; for beta-elimination activity is Lys-57. DNA contacts are provided by His-90, Arg-109, and Lys-150. The FPG-type zinc-finger motif lies at 235–269 (HVYGRAKKKCLLCSSIIQEEKIGQRNTFWCGHCQP). Arg-259 functions as the Proton donor; for delta-elimination activity in the catalytic mechanism.

It belongs to the FPG family. Monomer. Zn(2+) is required as a cofactor.

It carries out the reaction Hydrolysis of DNA containing ring-opened 7-methylguanine residues, releasing 2,6-diamino-4-hydroxy-5-(N-methyl)formamidopyrimidine.. The enzyme catalyses 2'-deoxyribonucleotide-(2'-deoxyribose 5'-phosphate)-2'-deoxyribonucleotide-DNA = a 3'-end 2'-deoxyribonucleotide-(2,3-dehydro-2,3-deoxyribose 5'-phosphate)-DNA + a 5'-end 5'-phospho-2'-deoxyribonucleoside-DNA + H(+). Involved in base excision repair of DNA damaged by oxidation or by mutagenic agents. Acts as a DNA glycosylase that recognizes and removes damaged bases. Has a preference for oxidized purines, such as 7,8-dihydro-8-oxoguanine (8-oxoG). Has AP (apurinic/apyrimidinic) lyase activity and introduces nicks in the DNA strand. Cleaves the DNA backbone by beta-delta elimination to generate a single-strand break at the site of the removed base with both 3'- and 5'-phosphates. This chain is Formamidopyrimidine-DNA glycosylase, found in Aliivibrio fischeri (strain ATCC 700601 / ES114) (Vibrio fischeri).